Here is a 421-residue protein sequence, read N- to C-terminus: Medium-chain specific acyl-CoA dehydrogenase, mitochondrial (421 aa).

The N-terminal 25 residues, 1-25 (MIALFRRSCGVLRSLSHFDWRSQHT), are a transit peptide targeting the mitochondrion. Residue K69 is modified to N6-acetyllysine; alternate. N6-succinyllysine; alternate is present on K69. K79 bears the N6-acetyllysine mark. 158-167 (YCVTEPVAGS) contacts FAD. Residue S167 participates in octanoyl-CoA binding. K179 is subject to N6-succinyllysine. Residue 191 to 193 (WIT) coordinates FAD. K212 carries the post-translational modification N6-acetyllysine; alternate. K212 is modified (N6-succinyllysine; alternate). An octanoyl-CoA-binding site is contributed by S216. Residues K217, K259, and K271 each carry the N6-acetyllysine; alternate modification. 3 positions are modified to N6-succinyllysine; alternate: K217, K259, and K271. D278 is an octanoyl-CoA binding site. K279 carries the N6-acetyllysine modification. Position 281 (R281) interacts with octanoyl-CoA. Position 301 is an N6-acetyllysine (K301). FAD-binding positions include 306–308 (RKT) and 316–317 (HQ). The octanoyl-CoA site is built by R349 and T351. T351 bears the Phosphothreonine mark. An FAD-binding site is contributed by 374–378 (QIFGG). E401 serves as a coordination point for octanoyl-CoA. Residue E401 is the Proton acceptor of the active site. Position 402-405 (402-405 (GTAQ)) interacts with FAD.

Belongs to the acyl-CoA dehydrogenase family. As to quaternary structure, homotetramer. Interacts with the heterodimeric electron transfer flavoprotein ETF. The cofactor is FAD. Post-translationally, acetylated. Could occur at proximity of the cofactor-binding sites and reduce the catalytic activity. Could be deacetylated by SIRT3.

The protein localises to the mitochondrion matrix. It carries out the reaction a medium-chain 2,3-saturated fatty acyl-CoA + oxidized [electron-transfer flavoprotein] + H(+) = a medium-chain (2E)-enoyl-CoA + reduced [electron-transfer flavoprotein]. The catalysed reaction is pentanoyl-CoA + oxidized [electron-transfer flavoprotein] + H(+) = (2E)-pentenoyl-CoA + reduced [electron-transfer flavoprotein]. The enzyme catalyses hexanoyl-CoA + oxidized [electron-transfer flavoprotein] + H(+) = (2E)-hexenoyl-CoA + reduced [electron-transfer flavoprotein]. It catalyses the reaction octanoyl-CoA + oxidized [electron-transfer flavoprotein] + H(+) = (2E)-octenoyl-CoA + reduced [electron-transfer flavoprotein]. It carries out the reaction decanoyl-CoA + oxidized [electron-transfer flavoprotein] + H(+) = (2E)-decenoyl-CoA + reduced [electron-transfer flavoprotein]. The catalysed reaction is dodecanoyl-CoA + oxidized [electron-transfer flavoprotein] + H(+) = (2E)-dodecenoyl-CoA + reduced [electron-transfer flavoprotein]. The enzyme catalyses tetradecanoyl-CoA + oxidized [electron-transfer flavoprotein] + H(+) = (2E)-tetradecenoyl-CoA + reduced [electron-transfer flavoprotein]. It catalyses the reaction oxidized [electron-transfer flavoprotein] + hexadecanoyl-CoA + H(+) = (2E)-hexadecenoyl-CoA + reduced [electron-transfer flavoprotein]. It participates in lipid metabolism; mitochondrial fatty acid beta-oxidation. Medium-chain specific acyl-CoA dehydrogenase is one of the acyl-CoA dehydrogenases that catalyze the first step of mitochondrial fatty acid beta-oxidation, an aerobic process breaking down fatty acids into acetyl-CoA and allowing the production of energy from fats. The first step of fatty acid beta-oxidation consists in the removal of one hydrogen from C-2 and C-3 of the straight-chain fatty acyl-CoA thioester, resulting in the formation of trans-2-enoyl-CoA. Electron transfer flavoprotein (ETF) is the electron acceptor that transfers electrons to the main mitochondrial respiratory chain via ETF-ubiquinone oxidoreductase (ETF dehydrogenase). Among the different mitochondrial acyl-CoA dehydrogenases, medium-chain specific acyl-CoA dehydrogenase acts specifically on acyl-CoAs with saturated 6 to 12 carbons long primary chains. This is Medium-chain specific acyl-CoA dehydrogenase, mitochondrial from Bos taurus (Bovine).